Consider the following 159-residue polypeptide: Large ribosomal subunit protein uL10 (159 aa).

It belongs to the universal ribosomal protein uL10 family. Part of the ribosomal stalk of the 50S ribosomal subunit. The N-terminus interacts with L11 and the large rRNA to form the base of the stalk. The C-terminus forms an elongated spine to which L12 dimers bind in a sequential fashion forming a multimeric L10(L12)X complex.

Its function is as follows. Forms part of the ribosomal stalk, playing a central role in the interaction of the ribosome with GTP-bound translation factors. This chain is Large ribosomal subunit protein uL10, found in Campylobacter lari (strain RM2100 / D67 / ATCC BAA-1060).